The following is a 484-amino-acid chain: Glutamyl-tRNA(Gln) amidotransferase subunit A (484 aa).

Residues lysine 76 and serine 151 each act as charge relay system in the active site. Catalysis depends on serine 175, which acts as the Acyl-ester intermediate.

This sequence belongs to the amidase family. GatA subfamily. Heterotrimer of A, B and C subunits.

It carries out the reaction L-glutamyl-tRNA(Gln) + L-glutamine + ATP + H2O = L-glutaminyl-tRNA(Gln) + L-glutamate + ADP + phosphate + H(+). In terms of biological role, allows the formation of correctly charged Gln-tRNA(Gln) through the transamidation of misacylated Glu-tRNA(Gln) in organisms which lack glutaminyl-tRNA synthetase. The reaction takes place in the presence of glutamine and ATP through an activated gamma-phospho-Glu-tRNA(Gln). The chain is Glutamyl-tRNA(Gln) amidotransferase subunit A from Halorhodospira halophila (strain DSM 244 / SL1) (Ectothiorhodospira halophila (strain DSM 244 / SL1)).